A 1114-amino-acid polypeptide reads, in one-letter code: MPGVVMDNANIGGLRHGPGNTYPQDGLSHSRGEVAQFNGANAQDGPVHVNGVEKNASQSRSVEAIPSNHASRVTKGPPELPHITQGFFPFAKLVNRSVQQCWNDLSDLITEMAEMQVNSHGIHPSTAPTTGKSPGNQSPGNIRKKLRILEFSHAKRAEFIKLLVLSQWSRQAADVSKLIDIQNFIRTRHQAYTNALQWVGDMKRDLVQAQVANPDLKTALEVLSRGKVASMSDLGYKPPRRLTVRGTLRKLQKINRLIGARLVVQDEIPPPFKSYRVHDGRVTFAVPGEFELDLSIGEENENSQFFFVDIRFLFSPSPPILKGRLLNELEMTINDVLQNSGLTGCFDLLHNLVLTNKINILFKQATELARSSWSDGLRVELLHRTLVVQYWTLKPGTKSWLEIGIKSGHRKSDSESPGLPSLKFRWVRDGGEVPCEDIAFDAKNLSMETVLRSVIALHVSHTLSSAYCKIRQSSLFSTGFLSLRAHLTRTEPGDCQLDVQLTETRHLQVSIEPMSGVSILSAKPTVSDRFDMERNPERSSVEDIVSRVARIRCNAAIEEIESKVKMLGFEPLNPRAWKLDIRRIFPPNFLRFTLFSHQLWGRSWIVAATSSMDGDSWWVVQLRPTLPAKGPPIPHANGYGQPILRSAQVVTDSFFPARYDIDDAYLANLGHSLSGILAIQSNARYLSDLQSIKFHPPPHKLKIEPDLRVPDILVRYDVSTLPSVFRVAMPAKAKKKSLIRDTIRLAFHGVDPREKCAIMVAYGNLVDSTATLCPLISSWDRSLVFQKGGTGFAMRLLAPAGHPVIVSLLENLQRLECVLSILETLQRKKVEIRTFSLSSISFIYGSERDLAASLNIHLSRNESLMKLSPTDLASRREFLFGLRLGIQFGLQNPHRRIQESLASSLNRSPTEAGLETVVELLTLTLPLMRALDQLMANPSHSGPLRLHVTVRNAKTYQLHYPGDEARFQLVAASHQNRLVWVLKDANSQGNSKNDDSITARLRQTLYTSKGDGWKGLETGVVAEVDQVGNLLRELEKCFVASRADRADPKHKPTDYAANHTGLNNPEISALAIKKGTTDGAKLSLSDSLTTLPNDKGNLSQADTAAQKEDIIMID.

Disordered stretches follow at residues 1-27 (MPGVVMDNANIGGLRHGPGNTYPQDGL), 40-79 (ANAQDGPVHVNGVEKNASQSRSVEAIPSNHASRVTKGPPE), and 120-141 (HGIHPSTAPTTGKSPGNQSPGN). Residues 126-140 (TAPTTGKSPGNQSPG) are compositionally biased toward polar residues.

It belongs to the Mediator complex subunit 14 family. As to quaternary structure, component of the Mediator complex.

Its subcellular location is the nucleus. Component of the Mediator complex, a coactivator involved in the regulated transcription of nearly all RNA polymerase II-dependent genes. Mediator functions as a bridge to convey information from gene-specific regulatory proteins to the basal RNA polymerase II transcription machinery. Mediator is recruited to promoters by direct interactions with regulatory proteins and serves as a scaffold for the assembly of a functional preinitiation complex with RNA polymerase II and the general transcription factors. The sequence is that of Mediator of RNA polymerase II transcription subunit 14 (rgr1) from Aspergillus niger (strain ATCC MYA-4892 / CBS 513.88 / FGSC A1513).